The chain runs to 264 residues: S-adenosylmethionine decarboxylase proenzyme (264 aa).

Serine 112 (schiff-base intermediate with substrate; via pyruvic acid) is an active-site residue. Serine 112 carries the pyruvic acid (Ser); by autocatalysis modification. Catalysis depends on histidine 117, which acts as the Proton acceptor; for processing activity. The Proton donor; for catalytic activity role is filled by cysteine 140.

Belongs to the prokaryotic AdoMetDC family. Type 2 subfamily. Heterooctamer of four alpha and four beta chains arranged as a tetramer of alpha/beta heterodimers. Requires pyruvate as cofactor. In terms of processing, is synthesized initially as an inactive proenzyme. Formation of the active enzyme involves a self-maturation process in which the active site pyruvoyl group is generated from an internal serine residue via an autocatalytic post-translational modification. Two non-identical subunits are generated from the proenzyme in this reaction, and the pyruvate is formed at the N-terminus of the alpha chain, which is derived from the carboxyl end of the proenzyme. The post-translation cleavage follows an unusual pathway, termed non-hydrolytic serinolysis, in which the side chain hydroxyl group of the serine supplies its oxygen atom to form the C-terminus of the beta chain, while the remainder of the serine residue undergoes an oxidative deamination to produce ammonia and the pyruvoyl group blocking the N-terminus of the alpha chain.

The catalysed reaction is S-adenosyl-L-methionine + H(+) = S-adenosyl 3-(methylsulfanyl)propylamine + CO2. It participates in amine and polyamine biosynthesis; S-adenosylmethioninamine biosynthesis; S-adenosylmethioninamine from S-adenosyl-L-methionine: step 1/1. Functionally, catalyzes the decarboxylation of S-adenosylmethionine to S-adenosylmethioninamine (dcAdoMet), the propylamine donor required for the synthesis of the polyamines spermine and spermidine from the diamine putrescine. In Serratia proteamaculans (strain 568), this protein is S-adenosylmethionine decarboxylase proenzyme.